A 396-amino-acid polypeptide reads, in one-letter code: Elongation factor Tu-B (396 aa).

The tr-type G domain occupies 10–206 (KLHVNVGTIG…ALDTFIPDPT (197 aa)). A G1 region spans residues 19 to 26 (GHVDHGKT). 19 to 26 (GHVDHGKT) contacts GTP. Threonine 26 lines the Mg(2+) pocket. The G2 stretch occupies residues 60–64 (GITIS). A G3 region spans residues 81–84 (DCPG). GTP-binding positions include 81 to 85 (DCPGH) and 136 to 139 (NKAD). A G4 region spans residues 136 to 139 (NKAD). The interval 174–176 (SAR) is G5.

Belongs to the TRAFAC class translation factor GTPase superfamily. Classic translation factor GTPase family. EF-Tu/EF-1A subfamily. Monomer.

The protein localises to the cytoplasm. It carries out the reaction GTP + H2O = GDP + phosphate + H(+). In terms of biological role, GTP hydrolase that promotes the GTP-dependent binding of aminoacyl-tRNA to the A-site of ribosomes during protein biosynthesis. This Xanthomonas campestris pv. campestris (strain ATCC 33913 / DSM 3586 / NCPPB 528 / LMG 568 / P 25) protein is Elongation factor Tu-B.